Here is a 512-residue protein sequence, read N- to C-terminus: cAMP-dependent protein kinase catalytic subunit (512 aa).

Over residues 1–15 (MDTTAVASKGSTNVG) the composition is skewed to polar residues. Disordered regions lie at residues 1 to 79 (MDTT…SSLW) and 118 to 166 (IDNL…GLRD). Low complexity predominate over residues 16-27 (SSTDTLSTSASL). Composition is skewed to polar residues over residues 32 to 52 (NAGS…SFNG) and 62 to 79 (SDAS…SSLW). Over residues 143 to 166 (SRDGRGELGSEHGERRSAMDGLRD) the composition is skewed to basic and acidic residues. One can recognise a Protein kinase domain in the interval 201-456 (FNFLQTLGTG…SMDIIMHPWF (256 aa)). Residues 207-215 (LGTGSFGRV) and K230 each bind ATP. Residue D324 is the Proton acceptor of the active site. A Phosphothreonine modification is found at T356. The AGC-kinase C-terminal domain occupies 457 to 512 (RDISWDKILTRKIEVPYVPPIQAGMGDSSQFDAYADVATDYGTSEDPEFTSIFKDF).

Belongs to the protein kinase superfamily. AGC Ser/Thr protein kinase family. cAMP subfamily.

It carries out the reaction L-seryl-[protein] + ATP = O-phospho-L-seryl-[protein] + ADP + H(+). The catalysed reaction is L-threonyl-[protein] + ATP = O-phospho-L-threonyl-[protein] + ADP + H(+). Its activity is regulated as follows. Activated by cAMP. This Schizosaccharomyces pombe (strain 972 / ATCC 24843) (Fission yeast) protein is cAMP-dependent protein kinase catalytic subunit (pka1).